Here is a 400-residue protein sequence, read N- to C-terminus: Endophilin-B2 (400 aa).

Methionine 1 carries the post-translational modification N-acetylmethionine. The segment at 1–27 (MDFNMKKLASDAGIFFTRAVQFTEEKF) is membrane-binding amphipathic helix. Phosphoserine is present on serine 10. Positions 24–287 (EEKFGQAEKT…LGSSQGAIFP (264 aa)) constitute a BAR domain. Positions 205–234 (SASALWNDEVDKAEQELRVAQTEFDRQAEV) form a coiled coil. Positions 340–400 (SGTRKARVLY…VPVTYLELLS (61 aa)) constitute an SH3 domain. Serine 400 is subject to Phosphoserine.

It belongs to the endophilin family. Homodimer, and heterodimer with SH3GLB1.

The protein localises to the cytoplasm. This is Endophilin-B2 (Sh3glb2) from Mus musculus (Mouse).